Consider the following 97-residue polypeptide: Small ribosomal subunit protein bS20 (97 aa).

Belongs to the bacterial ribosomal protein bS20 family.

Its function is as follows. Binds directly to 16S ribosomal RNA. This Prochlorococcus marinus (strain MIT 9312) protein is Small ribosomal subunit protein bS20.